Reading from the N-terminus, the 410-residue chain is MPHSTNKELILGIMAGTAGISLLAFWYHKVLKPRTTMNFPKLLSLGKKFGSLTLPEESHSAQGASVVFQRRQLQILEKLNELLTNMEELKEEIRFLKETIPKLEECIQDEFGGKVTVHKISPQHRARKKKGTTVQRSATSNSSEEAESEGGYITANTDTEEQNFPFPKALNTHIEELKLDVLLQKADHLRTNESHKMESFELLCDHKEKFSEETEFLWRLARAYGDMYDLSTSTQEKKHYANIGKTLGERAITRAPMNGHCHLWYAVLCGYVSEFEGLQNKINCGHLFKKHLEIAIQLLPEEPLLYYLKGRYCYTVSRLSWIEKKMAATLFGEIPYSTVHEALHNFLKTEELQPGYSMSNYMYTAKCYVELGEPQEACKFCNLALLLPVVTKEDKDAHKEVKKMISSLKR.

A helical transmembrane segment spans residues 9-28 (LILGIMAGTAGISLLAFWYH). Serine 51 is subject to Phosphoserine. Residues 69-110 (QRRQLQILEKLNELLTNMEELKEEIRFLKETIPKLEECIQDE) are a coiled coil. Positions 120 to 151 (ISPQHRARKKKGTTVQRSATSNSSEEAESEGG) are disordered. Residue serine 121 is modified to Phosphoserine. Over residues 121 to 131 (SPQHRARKKKG) the composition is skewed to basic residues. Phosphothreonine is present on threonine 139. Tyrosine 152 is subject to Phosphotyrosine. Threonine 154 and threonine 157 each carry phosphothreonine.

Belongs to the RMDN family. In terms of assembly, interacts with microtubules.

The protein localises to the membrane. The protein resides in the cytoplasm. Its subcellular location is the cytoskeleton. It is found in the spindle. It localises to the spindle pole. This is Regulator of microtubule dynamics protein 2 (Rmdn2) from Mus musculus (Mouse).